Consider the following 208-residue polypeptide: Large ribosomal subunit protein uL3 (208 aa).

Gln-149 is subject to N5-methylglutamine.

The protein belongs to the universal ribosomal protein uL3 family. Part of the 50S ribosomal subunit. Forms a cluster with proteins L14 and L19. Methylated by PrmB.

Its function is as follows. One of the primary rRNA binding proteins, it binds directly near the 3'-end of the 23S rRNA, where it nucleates assembly of the 50S subunit. This is Large ribosomal subunit protein uL3 from Haemophilus influenzae (strain PittGG).